Here is a 761-residue protein sequence, read N- to C-terminus: Coenzyme PQQ synthesis protein F (761 aa).

Histidine 49 is a Zn(2+) binding site. Glutamate 52 serves as the catalytic Proton acceptor. Positions 53 and 130 each coordinate Zn(2+).

The protein belongs to the peptidase M16 family. Zn(2+) serves as cofactor.

It participates in cofactor biosynthesis; pyrroloquinoline quinone biosynthesis. In terms of biological role, required for coenzyme pyrroloquinoline quinone (PQQ) biosynthesis. It is thought that this protein is a protease that cleaves peptides bond in a small peptide (gene pqqA), providing the glutamate and tyrosine residues which are necessary for the synthesis of PQQ. The protein is Coenzyme PQQ synthesis protein F (pqqF) of Klebsiella pneumoniae.